A 419-amino-acid polypeptide reads, in one-letter code: Serine hydroxymethyltransferase 1 (419 aa).

(6S)-5,6,7,8-tetrahydrofolate-binding positions include L121 and G125 to L127. K230 is modified (N6-(pyridoxal phosphate)lysine). S356 to F358 contacts (6S)-5,6,7,8-tetrahydrofolate.

Belongs to the SHMT family. Homodimer. Requires pyridoxal 5'-phosphate as cofactor.

It is found in the cytoplasm. It catalyses the reaction (6R)-5,10-methylene-5,6,7,8-tetrahydrofolate + glycine + H2O = (6S)-5,6,7,8-tetrahydrofolate + L-serine. It functions in the pathway one-carbon metabolism; tetrahydrofolate interconversion. The protein operates within amino-acid biosynthesis; glycine biosynthesis; glycine from L-serine: step 1/1. In terms of biological role, catalyzes the reversible interconversion of serine and glycine with tetrahydrofolate (THF) serving as the one-carbon carrier. This reaction serves as the major source of one-carbon groups required for the biosynthesis of purines, thymidylate, methionine, and other important biomolecules. Also exhibits THF-independent aldolase activity toward beta-hydroxyamino acids, producing glycine and aldehydes, via a retro-aldol mechanism. The polypeptide is Serine hydroxymethyltransferase 1 (Colwellia psychrerythraea (strain 34H / ATCC BAA-681) (Vibrio psychroerythus)).